The following is a 347-amino-acid chain: MRIEQDLKLGFKDVLFRPKRSTLKSRSQVELTRDFTFKHSGRQWSGVPIIAANMDSVGSFEMAASLSKHNVMTAIHKHYTVDDWAGFVKNNDAAVLNNAMVSTGTSEADFQKTKDIMALTEDLIFICIDIANGYSEHLVEYVQKVRAEFPTKVISAGNVVTGDMVEELILAGADIVKVGIGPGSVCTTRVKTGVGYPQLSAIIECSDAAHGLGGRIIGDGGCSCAGDVSKAFGGGADFVMLGGMLAGHEESNGEVIEKDGEMFMKFYGMSSQSAMDKHSGGVANYRAAEGKTVLLPFRGPVENTIQDIMGGIRSTCTYVGAAQLKELTKRATFIRVQEQENNVYGKE.

108–131 serves as a coordination point for NADP(+); sequence ADFQKTKDIMALTEDLIFICIDIA. The K(+) site is built by G181 and G183. The Thioimidate intermediate role is filled by C186. Position 216–239 (216–239) interacts with NADP(+); sequence IIGDGGCSCAGDVSKAFGGGADFV.

It belongs to the IMPDH/GMPR family. GuaC type 1 subfamily. In terms of assembly, homotetramer.

It carries out the reaction IMP + NH4(+) + NADP(+) = GMP + NADPH + 2 H(+). Catalyzes the irreversible NADPH-dependent deamination of GMP to IMP. It functions in the conversion of nucleobase, nucleoside and nucleotide derivatives of G to A nucleotides, and in maintaining the intracellular balance of A and G nucleotides. The chain is GMP reductase from Photobacterium profundum (strain SS9).